Consider the following 193-residue polypeptide: MTDYLLLFVGTVLVNNFVLVKFLGLCPFMGVSKKLETAMGMGLATTFVMTLASICAWLIDTWILIPLNLIYLRTMAFILVIAVVVQFTEMVVRKTSPVLYRLLGIFLPLITTNCAVLGVALLNINLGHNFLQSALYGFSAAVGFSLVMVLFAAIRERLAVADVPAPFRGNAIALITAGLMSLAFMGFSGLVKL.

The next 6 helical transmembrane spans lie at 5–25 (LLLFVGTVLVNNFVLVKFLGL), 47–67 (FVMTLASICAWLIDTWILIPL), 72–92 (LRTMAFILVIAVVVQFTEMVV), 102–122 (LLGIFLPLITTNCAVLGVALL), 134–154 (ALYGFSAAVGFSLVMVLFAAI), and 171–191 (AIALITAGLMSLAFMGFSGLV).

It belongs to the NqrDE/RnfAE family. In terms of assembly, the complex is composed of six subunits: RsxA, RsxB, RsxC, RsxD, RsxE and RsxG.

It is found in the cell inner membrane. Part of a membrane-bound complex that couples electron transfer with translocation of ions across the membrane. Required to maintain the reduced state of SoxR. The polypeptide is Ion-translocating oxidoreductase complex subunit A (Escherichia coli O45:K1 (strain S88 / ExPEC)).